A 910-amino-acid polypeptide reads, in one-letter code: E3 ubiquitin-protein ligase MARCHF6 (910 aa).

M1 carries the N-acetylmethionine modification. The segment at 1–62 (MDTAEEDICR…ELCKHRFAFT (62 aa)) adopts an RING-CH-type zinc-finger fold. The Cytoplasmic segment spans residues 1–91 (MDTAEEDICR…LVTSIGTAIR (91 aa)). Residues C9, C12, C26, C28, H36, C39, C52, and C55 each contribute to the Zn(2+) site. A helical membrane pass occupies residues 92 to 112 (YWFHYTLVAFAWLGVVPLTAC). At 113 to 142 (RIYKCLFTGSVSSLLTLPLDMLSTENLLAD) the chain is on the extracellular side. A helical membrane pass occupies residues 143-163 (CLQGCFVVTCTLCAFISLVWL). Residues 164 to 283 (REQIVHGGAP…WERMLGLDGS (120 aa)) lie on the Cytoplasmic side of the membrane. The interval 185-256 (AAGHHQNEAP…AADANNGAQD (72 aa)) is disordered. The segment covering 223–248 (DAQDDQAEEEEEDNEEEDDAGVEDAA) has biased composition (acidic residues). Residues 284-304 (LVFLEHVFWVVSLNTLFILVF) form a helical membrane-spanning segment. Over 305–336 (AFCPYHIGHFSLVGLGFEEHVQASHFEGLITT) the chain is Extracellular. The helical transmembrane segment at 337 to 357 (IVGYILLAITLIICHGLATLV) threads the bilayer. Residues 358 to 376 (KFHRSRRLLGVCYIVVKVS) are Cytoplasmic-facing. The chain crosses the membrane as a helical span at residues 377–397 (LLVVVEIGVFPLICGWWLDIC). At 398–421 (SLEMFDATLKDRELSFQSAPGTTM) the chain is on the extracellular side. A helical transmembrane segment spans residues 422–442 (FLHWLVGMVYVFYFASFILLL). Residues 443-480 (REVLRPGVLWFLRNLNDPDFNPVQEMIHLPIYRHLRRF) lie on the Cytoplasmic side of the membrane. A helical transmembrane segment spans residues 481–501 (ILSVIVFGSIVLLMLWLPIRI). Over 502–519 (IKSVLPNFLPYNVMLYSD) the chain is Extracellular. Residues 520–540 (APVSELSLELLLLQVVLPALL) traverse the membrane as a helical segment. Residues 541 to 632 (EQGHTRQWLK…YRRPLNFPLR (92 aa)) are Cytoplasmic-facing. Residues 633–653 (IFLLIVFMCITLLIASLICLT) form a helical membrane-spanning segment. At 654 to 678 (LPVFAGRWLMSFWTGTAKIHELYTA) the chain is on the extracellular side. Residues 679–699 (ACGLYVCWLTIRAVTVMVAWM) form a helical membrane-spanning segment. At 700–721 (PQGRRVIFQKVKEWSLMIMKTL) the chain is on the cytoplasmic side. Residues 722 to 742 (IVAVLLAGVVPLLLGLLFELV) form a helical membrane-spanning segment. Residues 743–764 (IVAPLRVPLDQTPLFYPWQDWA) lie on the Extracellular side of the membrane. Residues 765 to 785 (LGVLHAKIIAAITLMGPQWWL) traverse the membrane as a helical segment. The Cytoplasmic portion of the chain corresponds to 786–815 (KTVIEQVYANGIRNIDLHYIVRKLAAPVIS). The helical transmembrane segment at 816-836 (VLLLSLCVPYVIASGVVPLLG) threads the bilayer. Topologically, residues 837 to 848 (VTAEMQNLVHRR) are extracellular. Residues 849 to 869 (IYPFLLMVVVLMAILSFQVRQ) traverse the membrane as a helical segment. The Cytoplasmic segment spans residues 870–910 (FKRLYEHIKNDKYLVGQRLVNYERKSGKQGSSPPPPQSSQE).

Interacts with DIO2. Interacts with SQLE. In terms of processing, auto-ubiquitinated, which results in proteasomal degradation. Deubiquitinated by USP19; protecting MARCHF6 from p97-mediated proteasomal degradation. As to expression, present in brain (at protein level).

It is found in the endoplasmic reticulum membrane. It catalyses the reaction S-ubiquitinyl-[E2 ubiquitin-conjugating enzyme]-L-cysteine + [acceptor protein]-L-lysine = [E2 ubiquitin-conjugating enzyme]-L-cysteine + N(6)-ubiquitinyl-[acceptor protein]-L-lysine.. Its pathway is protein modification; protein ubiquitination. Endoplasmic reticulum membrane-associated E3 ubiquitin ligase that plays a critical role in mitigating endoplasmic reticulum stress, the regulation of cholesterol and lipid homeostasis, and ferroptosis. Acts as a pivotal component of both the Ac/N-degron pathway (targeting the N-terminal acetyl group of substrates) and the ER-associated protein degradation-cytosol (ERAD-C) pathway (targeting misfolded substrates). For instance, mediates the degradation of Ac/N-degron-bearing proteins such as the G-protein regulator RGS2 and the lipid droplet protein PLIN2. Suppresses endoplasmic reticulum stress and ferroptosis through cytosolic POMC degradation. Prevents ferroptosis by acting as a NADPH sensor during lipid peroxidation through its C-terminal regulatory region. Facilitates also the degradation of selected endoplasmic reticulum proteins by associating with signal peptide peptidase for the turnover of endogenous tail-anchored proteins. Promotes ubiquitination of DIO2, leading to its degradation. By ubiquitinating and thereby modulating the stability of many proteins of the cholesterol pathway including SQLE, CYP51A1, CYP11A1 and HMGCR, acts as a crucial post-translational regulator of cholesterol synthesis. In Homo sapiens (Human), this protein is E3 ubiquitin-protein ligase MARCHF6.